A 375-amino-acid chain; its full sequence is Paralyzed arrest at two-fold protein 6 (375 aa).

The tract at residues 1–51 (MSTLGRSKTPSRDEPKKPGVFEKLSGTLSRKKKAPEDEHGNQGGAHHATDE) is disordered. Basic and acidic residues predominate over residues 10 to 20 (PSRDEPKKPGV). 2 Calponin-homology (CH) domains span residues 99-206 (AQVV…LHYR) and 266-373 (AHVK…TKYK).

This sequence belongs to the parvin family. May interact (via calponin-homology (CH) 2 domain) with pat-4 (via kinase domain). May form a complex with unc-112 and pat-4. Component of an integrin containing attachment complex, composed of at least pat-2, pat-3, pat-4, pat-6, unc-52, unc-97 and unc-112. As to expression, expressed from 1.5 stage embryos, mostly within the muscle cells. In adult hermaphrodites, expressed in the attachments of other muscles, including the uterine, anal depressor, anal sphincter, and vulval muscles, as well as in the spermatheca and the distal tip cells. Expressed in mechanosensory receptor neurons ALML/R, PLML/R, AVM, and PVM. Localizes at body wall muscle attachments.

The protein localises to the cytoplasm. The protein resides in the cytoskeleton. It localises to the myofibril. It is found in the sarcomere. Its subcellular location is the m line. The protein localises to the perikaryon. The protein resides in the cell projection. It localises to the axon. Its function is as follows. Involved in the regulation of cell adhesion and cytoskeleton organization. Component of an integrin containing attachment complex, which is required for muscle development and maintenance. During embryonic development, required to recruit cpna-1, unc-89 and myofilaments to newly forming integrin attachments composed of integrins pat-2/pat-3, pat-4 and unc-112. Also required to reposition the integrin-based attachments so that they form the highly ordered array of dense body and M-line attachments that are characteristic of mature muscle cells. During the formation of neuromuscular junctions at the larval stage, negatively regulates membrane protrusion from body wall muscles. The chain is Paralyzed arrest at two-fold protein 6 from Caenorhabditis elegans.